The following is a 307-amino-acid chain: Acyl transferase (307 aa).

Residues S116, D213, and H243 each act as charge relay system in the active site.

The protein belongs to the LuxD family.

It participates in lipid metabolism; fatty acid reduction for biolumincescence. Acyl transferase is part of the fatty acid reductase system required for aldehyde biosynthesis; it produces fatty acids for the luminescent reaction. The polypeptide is Acyl transferase (Aliivibrio fischeri (strain MJ11) (Vibrio fischeri)).